Reading from the N-terminus, the 367-residue chain is Germination protease (367 aa).

Residues 1–13 (MEEQQIPFQVRTD) constitute a propeptide that is removed on maturation. A disordered region spans residues 267–287 (KDDPSKSLTPAGMSFGNRKLT).

Belongs to the peptidase A25 family. Homotetramer. Autoproteolytically processed. The inactive tetrameric zymogen termed p46 autoprocesses to a smaller form termed p41, which is active only during spore germination.

The catalysed reaction is Endopeptidase action with P4 Glu or Asp, P1 preferably Glu &gt; Asp, P1' hydrophobic and P2' Ala.. Initiates the rapid degradation of small, acid-soluble proteins during spore germination. This is Germination protease from Oceanobacillus iheyensis (strain DSM 14371 / CIP 107618 / JCM 11309 / KCTC 3954 / HTE831).